We begin with the raw amino-acid sequence, 438 residues long: GDP-mannose 6-dehydrogenase (438 aa).

NAD(+) contacts are provided by Tyr10, Val11, Asp30, Lys35, Thr86, and Thr124. Residues Glu161, Lys210, Asn214, His217, Asn225, Tyr256, Tyr257, Arg259, Phe262, and Gly265 each contribute to the GDP-alpha-D-mannuronate site. Cys268 is a catalytic residue. Residue Lys271 coordinates NAD(+). Position 324 (Lys324) interacts with GDP-alpha-D-mannuronate. Arg331 contributes to the NAD(+) binding site.

The protein belongs to the UDP-glucose/GDP-mannose dehydrogenase family.

The catalysed reaction is GDP-alpha-D-mannose + 2 NAD(+) + H2O = GDP-alpha-D-mannuronate + 2 NADH + 3 H(+). Its pathway is glycan biosynthesis; alginate biosynthesis. Its function is as follows. Catalyzes the oxidation of guanosine diphospho-D-mannose (GDP-D-mannose) to GDP-D-mannuronic acid, a precursor for alginate polymerization. The alginate layer causes a mucoid phenotype and provides a protective barrier against host immune defenses and antibiotics. This Pseudomonas putida (strain ATCC 47054 / DSM 6125 / CFBP 8728 / NCIMB 11950 / KT2440) protein is GDP-mannose 6-dehydrogenase (algD).